A 662-amino-acid polypeptide reads, in one-letter code: Glycine--tRNA ligase beta subunit (662 aa).

It belongs to the class-II aminoacyl-tRNA synthetase family. Tetramer of two alpha and two beta subunits.

It localises to the cytoplasm. It catalyses the reaction tRNA(Gly) + glycine + ATP = glycyl-tRNA(Gly) + AMP + diphosphate. The polypeptide is Glycine--tRNA ligase beta subunit (Rickettsia akari (strain Hartford)).